A 302-amino-acid polypeptide reads, in one-letter code: MLNQLNQLTTEASNPASAQIDSLSALQIVQLINQQDALVAAAVNTQAEMIAEAVDVIADRFRSNGRLIYLGAGTSGRLGVLDASECPPTFRTPPEMVVGVIAGGPEALTRAIEGAEDHPEFAERDLAKINLSSNDVLVGIATSGRTPYVIGGLKYARSIGAFTIGLSCNPNCQLRPLSQIMIAPIVGPEIVSGSTRMKAGTATKMVLNMLTTGAMIRIGKTYGNRMVDVRATNEKLVARSRQMLSEIVGISGDQAEQLLQQCDGEVKTAIVVHIKEVSPQTARQMLVDVDGHLSRLLATPSE.

The 164-residue stretch at isoleucine 57–lysine 220 folds into the SIS domain. Glutamate 85 functions as the Proton donor in the catalytic mechanism. The active site involves glutamate 116.

Belongs to the GCKR-like family. MurNAc-6-P etherase subfamily. As to quaternary structure, homodimer.

The enzyme catalyses N-acetyl-D-muramate 6-phosphate + H2O = N-acetyl-D-glucosamine 6-phosphate + (R)-lactate. It functions in the pathway amino-sugar metabolism; N-acetylmuramate degradation. Its function is as follows. Specifically catalyzes the cleavage of the D-lactyl ether substituent of MurNAc 6-phosphate, producing GlcNAc 6-phosphate and D-lactate. The sequence is that of N-acetylmuramic acid 6-phosphate etherase from Rhodopirellula baltica (strain DSM 10527 / NCIMB 13988 / SH1).